Here is a 361-residue protein sequence, read N- to C-terminus: Protein-L-isoaspartate O-methyltransferase domain-containing protein 2 (361 aa).

G2 carries N-myristoyl glycine lipidation. S64 is a catalytic residue. 3 adoMet binding motif regions span residues 85–94, 160–164, and 181–191; these read LNLGSGTGYL, YDRVY, and LKVGGILVMPL. The segment at 240 to 250 is BC-box; that stretch reads VRSLQDLARIA. Residues 303-336 form a disordered region; that stretch reads SNPSDDNSCEDLEEERREEEEKTPPETKPDPPVN. Residues 309-320 are compositionally biased toward acidic residues; it reads NSCEDLEEERRE. Residues 321–331 are compositionally biased toward basic and acidic residues; that stretch reads EEEKTPPETKP. Positions 345-348 are CUL-box; the sequence is LPLP.

It belongs to the methyltransferase superfamily. L-isoaspartyl/D-aspartyl protein methyltransferase family.

The protein localises to the cytoplasm. May act as a substrate recognition component of an ECS (Elongin BC-CUL5-SOCS-box protein) E3 ubiquitin ligase complex which mediates the ubiquitination and subsequent proteasomal degradation of target proteins. May bind to the methyltransferase cofactor S-adenosylmethionine (AdoMet) via the N-terminal AdoMet binding motif, but probably does not display methyltransferase activity. The chain is Protein-L-isoaspartate O-methyltransferase domain-containing protein 2 (PCMTD2) from Homo sapiens (Human).